A 477-amino-acid chain; its full sequence is 3-isopropylmalate dehydratase large subunit (477 aa).

Residues Cys358, Cys419, and Cys422 each coordinate [4Fe-4S] cluster.

Belongs to the aconitase/IPM isomerase family. LeuC type 1 subfamily. As to quaternary structure, heterodimer of LeuC and LeuD. It depends on [4Fe-4S] cluster as a cofactor.

The catalysed reaction is (2R,3S)-3-isopropylmalate = (2S)-2-isopropylmalate. It functions in the pathway amino-acid biosynthesis; L-leucine biosynthesis; L-leucine from 3-methyl-2-oxobutanoate: step 2/4. Catalyzes the isomerization between 2-isopropylmalate and 3-isopropylmalate, via the formation of 2-isopropylmaleate. The protein is 3-isopropylmalate dehydratase large subunit of Acinetobacter baylyi (strain ATCC 33305 / BD413 / ADP1).